The primary structure comprises 137 residues: Holo-[acyl-carrier-protein] synthase (137 aa).

Mg(2+) contacts are provided by Asp7 and Glu58.

It belongs to the P-Pant transferase superfamily. AcpS family. Mg(2+) serves as cofactor.

It is found in the cytoplasm. It catalyses the reaction apo-[ACP] + CoA = holo-[ACP] + adenosine 3',5'-bisphosphate + H(+). Functionally, transfers the 4'-phosphopantetheine moiety from coenzyme A to a Ser of acyl-carrier-protein. In Chloroflexus aurantiacus (strain ATCC 29366 / DSM 635 / J-10-fl), this protein is Holo-[acyl-carrier-protein] synthase.